A 127-amino-acid polypeptide reads, in one-letter code: Aspartate 1-decarboxylase (127 aa).

S25 (schiff-base intermediate with substrate; via pyruvic acid) is an active-site residue. S25 bears the Pyruvic acid (Ser) mark. T57 serves as a coordination point for substrate. Y58 functions as the Proton donor in the catalytic mechanism. Position 73 to 75 (73 to 75 (GAA)) interacts with substrate.

This sequence belongs to the PanD family. In terms of assembly, heterooctamer of four alpha and four beta subunits. Pyruvate serves as cofactor. Is synthesized initially as an inactive proenzyme, which is activated by self-cleavage at a specific serine bond to produce a beta-subunit with a hydroxyl group at its C-terminus and an alpha-subunit with a pyruvoyl group at its N-terminus.

Its subcellular location is the cytoplasm. The catalysed reaction is L-aspartate + H(+) = beta-alanine + CO2. It functions in the pathway cofactor biosynthesis; (R)-pantothenate biosynthesis; beta-alanine from L-aspartate: step 1/1. Its function is as follows. Catalyzes the pyruvoyl-dependent decarboxylation of aspartate to produce beta-alanine. The chain is Aspartate 1-decarboxylase from Vesicomyosocius okutanii subsp. Calyptogena okutanii (strain HA).